The primary structure comprises 522 residues: Probable protein kinase UbiB (522 aa).

The Protein kinase domain occupies 119 to 496; the sequence is SFDADPVASA…QRRTNRLLLT (378 aa). ATP-binding positions include 125–133 and K147; that span reads VASASIAQV. D282 serves as the catalytic Proton acceptor. Residues 494–514 traverse the membrane as a helical segment; that stretch reads LLTVFYLIGGFVAGGLFAHWI.

This sequence belongs to the ABC1 family. UbiB subfamily.

It is found in the cell inner membrane. The protein operates within cofactor biosynthesis; ubiquinone biosynthesis [regulation]. In terms of biological role, is probably a protein kinase regulator of UbiI activity which is involved in aerobic coenzyme Q (ubiquinone) biosynthesis. In Leptothrix cholodnii (strain ATCC 51168 / LMG 8142 / SP-6) (Leptothrix discophora (strain SP-6)), this protein is Probable protein kinase UbiB.